The sequence spans 251 residues: NADPH-dependent oxidoreductase (251 aa).

Belongs to the flavin oxidoreductase frp family. FMN serves as cofactor.

Reduces FMN, organic nitro compounds and disulfide DTNB. Involved in maintenance of the cellular redox state and the disulfide stress response. This chain is NADPH-dependent oxidoreductase (nfrA), found in Staphylococcus aureus (strain MSSA476).